The following is a 288-amino-acid chain: Acetyl-coenzyme A carboxylase carboxyl transferase subunit beta (288 aa).

The region spanning 34-288 is the CoA carboxyltransferase N-terminal domain; it reads LFAKCPACKH…HLVAFHGGGQ (255 aa). Zn(2+) contacts are provided by C38, C41, C56, and C59. The segment at 38–59 adopts a C4-type zinc-finger fold; the sequence is CPACKHMIYKKDLGLAKICPTC.

Belongs to the AccD/PCCB family. As to quaternary structure, acetyl-CoA carboxylase is a heterohexamer composed of biotin carboxyl carrier protein (AccB), biotin carboxylase (AccC) and two subunits each of ACCase subunit alpha (AccA) and ACCase subunit beta (AccD). The cofactor is Zn(2+).

Its subcellular location is the cytoplasm. It carries out the reaction N(6)-carboxybiotinyl-L-lysyl-[protein] + acetyl-CoA = N(6)-biotinyl-L-lysyl-[protein] + malonyl-CoA. It participates in lipid metabolism; malonyl-CoA biosynthesis; malonyl-CoA from acetyl-CoA: step 1/1. Component of the acetyl coenzyme A carboxylase (ACC) complex. Biotin carboxylase (BC) catalyzes the carboxylation of biotin on its carrier protein (BCCP) and then the CO(2) group is transferred by the transcarboxylase to acetyl-CoA to form malonyl-CoA. The chain is Acetyl-coenzyme A carboxylase carboxyl transferase subunit beta from Streptococcus pyogenes serotype M6 (strain ATCC BAA-946 / MGAS10394).